The following is a 130-amino-acid chain: UPF0713 protein YngL (130 aa).

3 helical membrane passes run 4 to 25 (LSFLTFIMLILASYRLTHLIVF), 62 to 84 (MLNCYWCAGVWCAILIGLGYLFL), and 89 to 111 (IPLIFILAIAGAQAILETAVGVG).

It belongs to the UPF0713 family.

The protein resides in the cell membrane. This chain is UPF0713 protein YngL (yngL), found in Bacillus subtilis (strain 168).